We begin with the raw amino-acid sequence, 793 residues long: Nuclear cap-binding protein subunit 1 (793 aa).

Residues E28–R242 form the MIF4G domain.

The protein belongs to the NCBP1 family. As to quaternary structure, component of the nuclear cap-binding complex (CBC), a heterodimer composed of ncbp-1 and ncbp-1 that interacts with m7GpppG-capped RNA.

It is found in the nucleus. Functionally, component of the cap-binding complex (CBC), which binds cotranscriptionally to the 5'-cap of pre-mRNAs and is involved in various processes such as pre-mRNA splicing and RNA-mediated gene silencing (RNAi). The CBC complex is involved in miRNA-mediated RNA interference and is required for primary microRNAs (miRNAs) processing. In the CBC complex, ncbp-1 does not bind directly capped RNAs (m7GpppG-capped RNA) but is required to stabilize the movement of the N-terminal loop of ncbp-2 and lock the CBC into a high affinity cap-binding state with the cap structure. This chain is Nuclear cap-binding protein subunit 1 (ncbp-1), found in Caenorhabditis briggsae.